A 529-amino-acid chain; its full sequence is Cytochrome P450 monooxygenase fsoB (529 aa).

The helical transmembrane segment at 4–24 threads the bilayer; that stretch reads WLLSLLIAGVVFAIFQLRTVG. A heme-binding site is contributed by Cys436.

Belongs to the cytochrome P450 family. Heme is required as a cofactor.

The protein localises to the membrane. Cytochrome P450 monooxygenase; part of the gene cluster that mediates the biosynthesis of the enfumafungin-type antibiotic fuscoatroside. Four enzymes are sufficient to produce fuscoatroside: the terpene cyclase-glycosyl transferase fusion protein fsoAthe cytochrome P450 monoxygenases fsoD and fsoE, and the acetyltransferase fsoF; the cytochrome P450 monooxygenase fsoB and the glucose oxidase-like protein fsoC do not seem to play a role in biosynthesis of fuscoatroside. The protein is Cytochrome P450 monooxygenase fsoB of Humicola fuscoatra.